The following is a 394-amino-acid chain: Protein TsgA homolog (394 aa).

12 helical membrane-spanning segments follow: residues 11 to 31 (WISF…GMVL), 51 to 71 (FLNA…EIVP), 76 to 96 (LIFG…SHSL), 101 to 121 (LCMF…TFLI), 135 to 155 (LFTD…AAAI), 163 to 183 (YWVY…ALCF), 205 to 225 (LGVA…LGFI), 245 to 265 (SVVG…SAIL), 273 to 293 (IVTA…NTTD), 299 to 319 (WIIM…ITLG), 333 to 353 (FILT…GPIV), and 362 to 382 (LATT…LGFV).

This sequence belongs to the major facilitator superfamily. TsgA family.

It localises to the cell inner membrane. In Erwinia tasmaniensis (strain DSM 17950 / CFBP 7177 / CIP 109463 / NCPPB 4357 / Et1/99), this protein is Protein TsgA homolog.